A 398-amino-acid chain; its full sequence is Elongation factor Tu (398 aa).

Residues 10 to 207 enclose the tr-type G domain; that stretch reads KPHVNIGTIG…TADEYIPEPE (198 aa). The tract at residues 19-26 is G1; sequence GHVDHGKT. Position 19–26 (19–26) interacts with GTP; sequence GHVDHGKT. T26 contributes to the Mg(2+) binding site. Positions 63–67 are G2; sequence GITIN. The G3 stretch occupies residues 84 to 87; it reads DAPG. Residues 84-88 and 139-142 each bind GTP; these read DAPGH and NKID. The tract at residues 139–142 is G4; that stretch reads NKID. A G5 region spans residues 177–179; sequence SAL.

The protein belongs to the TRAFAC class translation factor GTPase superfamily. Classic translation factor GTPase family. EF-Tu/EF-1A subfamily. Monomer.

The protein localises to the cytoplasm. The enzyme catalyses GTP + H2O = GDP + phosphate + H(+). GTP hydrolase that promotes the GTP-dependent binding of aminoacyl-tRNA to the A-site of ribosomes during protein biosynthesis. This Streptococcus uberis (strain ATCC BAA-854 / 0140J) protein is Elongation factor Tu.